The chain runs to 560 residues: Protein SINE1 (560 aa).

G2 bears the N-acetylglycine mark. Residues P7–M287 are ARMADILLO-type fold. The region spanning K517–T560 is the KASH domain. A helical transmembrane segment spans residues L528 to N548. A Required for nuclear localization motif is present at residues T557–T560.

Interacts with SUN1 and SUN2. Binds to F-actin. Preferentially expressed in guards cells, but also detected in root cells.

The protein localises to the nucleus membrane. Its function is as follows. Plays a role in nucleus positioning in guard cells. In Arabidopsis thaliana (Mouse-ear cress), this protein is Protein SINE1.